A 340-amino-acid polypeptide reads, in one-letter code: Serpentine receptor class alpha-18 (340 aa).

Transmembrane regions (helical) follow at residues 29–49, 109–129, 149–169, 198–218, 249–269, and 285–305; these read FNFI…WLAI, VFEL…VFSL, FIAT…FYIV, VRTG…YVCV, ISIV…NLLI, and IVSF…VIYF.

This sequence belongs to the nematode receptor-like protein sra family.

The protein localises to the membrane. The polypeptide is Serpentine receptor class alpha-18 (sra-18) (Caenorhabditis elegans).